The sequence spans 248 residues: Thioesterase FSL2 (248 aa).

Active-site charge relay system residues include Ser125, Asp195, and His223.

It belongs to the LovG family.

The protein operates within secondary metabolite biosynthesis. Thioesterase; part of the gene cluster that mediates the biosynthesis of fusarielins F, G and H, decaketide compounds with 5 methylations and a decaline core that act as mycoestrogens as they stimulate growth of MCF-7 breast cancer cells. The initial compound in the pathway is produced by the reducing polyketide synthase FSL1. FSL1 lacks an active enoyl reductase (ER) domain and biosynthesis of fusarielins relies on the trans-acting enoyl reductase FSL5, before it is released through hydrolysis catalyzed by the thioesterase FSL2. Fusarielins F, G, and H have a C11=C12 cis double bond and is fully reduced between C10 and C11 and between C12 and C13. FSL3 can be involved in the formation of the C11=C12 cis double bond by moving a hypothetical C10=C11 or C12=C13 trans double bond to form prefusarielin. Prefusarielin is oxygenated at C15 and C16 by the cytochrome P450 monooxygenase FSL4, resulting in fusarielin F, which subsequently is epoxidized into fusarielin G by the same enzyme. The final step in the pathway is a reduction of the carboxylic acid moiety to yield fusarielin H via a still undetermined mechanism. The polypeptide is Thioesterase FSL2 (Gibberella zeae (strain ATCC MYA-4620 / CBS 123657 / FGSC 9075 / NRRL 31084 / PH-1) (Wheat head blight fungus)).